The chain runs to 421 residues: 3-isopropylmalate dehydratase large subunit (421 aa).

Positions 302, 362, and 365 each coordinate [4Fe-4S] cluster.

Belongs to the aconitase/IPM isomerase family. LeuC type 2 subfamily. As to quaternary structure, heterodimer of LeuC and LeuD. Requires [4Fe-4S] cluster as cofactor.

The enzyme catalyses (2R,3S)-3-isopropylmalate = (2S)-2-isopropylmalate. It functions in the pathway amino-acid biosynthesis; L-leucine biosynthesis; L-leucine from 3-methyl-2-oxobutanoate: step 2/4. In terms of biological role, catalyzes the isomerization between 2-isopropylmalate and 3-isopropylmalate, via the formation of 2-isopropylmaleate. The polypeptide is 3-isopropylmalate dehydratase large subunit (Nitratiruptor sp. (strain SB155-2)).